Reading from the N-terminus, the 405-residue chain is NAC transcription factor NAM-A1 (405 aa).

Low complexity predominate over residues 1 to 10 (MGSSDSSSGS). Residues 1–38 (MGSSDSSSGSAQKAARHQHEPPPPRQRGSAPELPPGFR) are disordered. Residues 33 to 204 (LPPGFRFHPT…DWVLCRIYKK (172 aa)) form the NAC domain. The DNA-binding element occupies 137 to 210 (LGVKKALVFY…IYKKINKAAA (74 aa)).

As to expression, expressed in flag leaves, green spikes and peduncles.

Its subcellular location is the nucleus. Its function is as follows. Transcription factor of the NAC family associated with the grain protein content (GPC). Accelerates senescence and increases nutrient remobilization from leaves to developing grains. The tetraploid cultivated wheat (T.durum) contains one additional gene coding for a functional protein (NAM-B2) and one extra pseudogene (NAM-B1). The chain is NAC transcription factor NAM-A1 (NAM-A1) from Triticum turgidum subsp. durum (Durum wheat).